An 89-amino-acid polypeptide reads, in one-letter code: Large ribosomal subunit protein uL23c (89 aa).

The protein belongs to the universal ribosomal protein uL23 family. In terms of assembly, part of the 50S ribosomal subunit.

The protein resides in the plastid. The protein localises to the chloroplast. Its function is as follows. Binds to 23S rRNA. This is Large ribosomal subunit protein uL23c (rpl23) from Zygnema circumcarinatum (Green alga).